The sequence spans 371 residues: Carbamoyl phosphate synthase small chain (371 aa).

The tract at residues 1-190 (MRKTAILALE…LYRENEKPLV (190 aa)) is CPSase. Positions 47, 237, and 239 each coordinate L-glutamine. Residues 189-371 (LVAVIDFGVK…FKEFVKMAQG (183 aa)) form the Glutamine amidotransferase type-1 domain. C264 (nucleophile) is an active-site residue. Residues L265, Q268, N306, and F309 each coordinate L-glutamine. Active-site residues include H348 and E350.

The protein belongs to the CarA family. Composed of two chains; the small (or glutamine) chain promotes the hydrolysis of glutamine to ammonia, which is used by the large (or ammonia) chain to synthesize carbamoyl phosphate. Tetramer of heterodimers (alpha,beta)4.

The enzyme catalyses hydrogencarbonate + L-glutamine + 2 ATP + H2O = carbamoyl phosphate + L-glutamate + 2 ADP + phosphate + 2 H(+). The catalysed reaction is L-glutamine + H2O = L-glutamate + NH4(+). It participates in amino-acid biosynthesis; L-arginine biosynthesis; carbamoyl phosphate from bicarbonate: step 1/1. It functions in the pathway pyrimidine metabolism; UMP biosynthesis via de novo pathway; (S)-dihydroorotate from bicarbonate: step 1/3. Small subunit of the glutamine-dependent carbamoyl phosphate synthetase (CPSase). CPSase catalyzes the formation of carbamoyl phosphate from the ammonia moiety of glutamine, carbonate, and phosphate donated by ATP, constituting the first step of 2 biosynthetic pathways, one leading to arginine and/or urea and the other to pyrimidine nucleotides. The small subunit (glutamine amidotransferase) binds and cleaves glutamine to supply the large subunit with the substrate ammonia. This is Carbamoyl phosphate synthase small chain from Aquifex aeolicus (strain VF5).